A 1976-amino-acid polypeptide reads, in one-letter code: Myosin-10 (1976 aa).

At Arg-18 the chain carries Omega-N-methylarginine. Positions Thr-31–Pro-81 constitute a Myosin N-terminal SH3-like domain. The Myosin motor domain occupies Ser-85–Asp-783. Gly-178 to Thr-185 serves as a coordination point for ATP. The residue at position 442 (Lys-442) is an N6-acetyllysine. The segment at Leu-661–His-683 is actin-binding. Residues Ile-786 to Ala-815 enclose the IQ domain. The stretch at Leu-845–Glu-1976 forms a coiled coil. The disordered stretch occupies residues Glu-1125–Glu-1175. Basic and acidic residues predominate over residues Ser-1129 to Leu-1155. Residue Ser-1145 is modified to Phosphoserine. 3 positions are modified to N6-acetyllysine: Lys-1241, Lys-1301, and Lys-1645. 2 disordered regions span residues Ala-1697–Ala-1718 and Lys-1874–Glu-1976. Positions Ser-1698–Gln-1708 are enriched in basic and acidic residues. At Arg-1930 the chain carries Omega-N-methylarginine. Ser-1935, Ser-1937, Ser-1938, and Ser-1939 each carry phosphoserine. Arg-1940 is modified (omega-N-methylarginine). Residues Ser-1952 and Ser-1956 each carry the phosphoserine modification. Residue Thr-1960 is modified to Phosphothreonine. Residues Val-1967–Glu-1976 show a composition bias toward polar residues. Ser-1975 is subject to Phosphoserine.

Belongs to the TRAFAC class myosin-kinesin ATPase superfamily. Myosin family. Myosin is a hexameric protein that consists of 2 heavy chain subunits (MHC), 2 alkali light chain subunits (MLC) and 2 regulatory light chain subunits (MLC-2). Interacts with PLEKHG6. Interacts with ECPAS. Interacts with LARP6. Interacts with MCC. Interacts with KIF26B. Interacts with CFAP95. Post-translationally, phosphorylated by ABL2. In terms of tissue distribution, in newborn kidney, expressed in the mesenchyme and ureteric buds.

It localises to the cell projection. The protein resides in the lamellipodium. Its function is as follows. Involved with LARP6 in the stabilization of type I collagen mRNAs for CO1A1 and CO1A2. During cell spreading, plays an important role in cytoskeleton reorganization, focal contacts formation (in the central part but not the margins of spreading cells), and lamellipodial extension; this function is mechanically antagonized by MYH9. Cellular myosin that appears to play a role in cytokinesis, cell shape, and specialized functions such as secretion and capping. This chain is Myosin-10 (Myh10), found in Mus musculus (Mouse).